A 278-amino-acid polypeptide reads, in one-letter code: Transmembrane protein 41B (278 aa).

Residues 1 to 31 are disordered; the sequence is MQVHERSHTGGHTFQCNHGNEKKAPAAGKVH. A run of 6 helical transmembrane segments spans residues 39–59, 96–116, 142–162, 184–204, 212–232, and 249–269; these read MSLL…FLVY, FYVE…TFAI, CSGL…RPVV, LINY…FINI, PLKV…FVAI, and SWNS…PAIF. Positions 127–238 are VTT domain; required for its function in autophagy; sequence GFLYPFPLAL…FVAIKAGTTL (112 aa).

Belongs to the TMEM41 family.

The protein resides in the endoplasmic reticulum membrane. It is found in the endomembrane system. The catalysed reaction is a 1,2-diacyl-sn-glycero-3-phospho-L-serine(in) = a 1,2-diacyl-sn-glycero-3-phospho-L-serine(out). The enzyme catalyses cholesterol(in) = cholesterol(out). It catalyses the reaction a 1,2-diacyl-sn-glycero-3-phosphocholine(in) = a 1,2-diacyl-sn-glycero-3-phosphocholine(out). It carries out the reaction a 1,2-diacyl-sn-glycero-3-phosphoethanolamine(in) = a 1,2-diacyl-sn-glycero-3-phosphoethanolamine(out). Its function is as follows. Phospholipid scramblase involved in lipid homeostasis and membrane dynamics processes. Has phospholipid scramblase activity toward cholesterol and phosphatidylserine, as well as phosphatidylethanolamine and phosphatidylcholine. Required for autophagosome formation: participates in early stages of autophagosome biogenesis at the endoplasmic reticulum (ER) membrane by reequilibrating the leaflets of the ER as lipids are extracted by atg2 (atg2a or atg2b) to mediate autophagosome assembly. In addition to autophagy, involved in other processes in which phospholipid scramblase activity is required. Required for normal motor neuron development. This chain is Transmembrane protein 41B, found in Xenopus laevis (African clawed frog).